A 205-amino-acid chain; its full sequence is Ras-related protein Rab-18-B (205 aa).

S17, G20, K21, S22, S23, D34, P35, T40, G66, K123, D125, and A152 together coordinate GTP. S22 lines the Mg(2+) pocket. 2 short sequence motifs (switch) span residues 31 to 45 (DTFDPELAATIGVDF) and 63 to 80 (DTAGQERFRTLTPSYYRG). T40 lines the Mg(2+) pocket. A lipid anchor (S-palmitoyl cysteine) is attached at C198. C202 carries the cysteine methyl ester modification. A lipid anchor (S-geranylgeranyl cysteine) is attached at C202. Positions 203–205 (SLV) are cleaved as a propeptide — removed in mature form.

It belongs to the small GTPase superfamily. Rab family. The cofactor is Mg(2+).

The protein localises to the endoplasmic reticulum membrane. It is found in the golgi apparatus. The protein resides in the cis-Golgi network membrane. It localises to the lipid droplet. Its subcellular location is the apical cell membrane. The catalysed reaction is GTP + H2O = GDP + phosphate + H(+). With respect to regulation, regulated by guanine nucleotide exchange factors (GEFs) which promote the exchange of bound GDP for free GTP. Regulated by GTPase activating proteins (GAPs) which increase the GTP hydrolysis activity at the ER membrane. Inhibited by GDP dissociation inhibitors (GDIs) which prevent Rab-GDP dissociation. Functionally, the small GTPases Rab are key regulators of intracellular membrane trafficking, from the formation of transport vesicles to their fusion with membranes. Rabs cycle between an inactive GDP-bound form and an active GTP-bound form that is able to recruit to membranes different sets of downstream effectors directly responsible for vesicle formation, movement, tethering and fusion. Required for the localization of ZFYVE1 to lipid droplets and for its function in mediating the formation of endoplasmic reticulum-lipid droplets (ER-LD) contacts. Also required for maintaining endoplasmic reticulum structure. Plays a role in apical endocytosis/recycling. Plays a key role in eye and brain development and neurodegeneration. The protein is Ras-related protein Rab-18-B (rab18b) of Danio rerio (Zebrafish).